The sequence spans 357 residues: DNA replication and repair protein RecF (357 aa).

30-37 contributes to the ATP binding site; it reads GANGSGKT.

This sequence belongs to the RecF family.

It localises to the cytoplasm. Functionally, the RecF protein is involved in DNA metabolism; it is required for DNA replication and normal SOS inducibility. RecF binds preferentially to single-stranded, linear DNA. It also seems to bind ATP. This is DNA replication and repair protein RecF from Salmonella arizonae (strain ATCC BAA-731 / CDC346-86 / RSK2980).